The following is a 246-amino-acid chain: Acetoacetate decarboxylase (246 aa).

Catalysis depends on K116, which acts as the Schiff-base intermediate with acetoacetate.

Belongs to the ADC family.

The enzyme catalyses acetoacetate + H(+) = acetone + CO2. Functionally, catalyzes the conversion of acetoacetate to acetone and carbon dioxide. This Burkholderia ambifaria (strain MC40-6) protein is Acetoacetate decarboxylase.